Consider the following 675-residue polypeptide: Protein PALS1 (675 aa).

Disordered regions lie at residues 1 to 34 (MTTSHMNGHVTEESDSEVKNVDLASPEEHQKHRE) and 51 to 78 (RRSAQLERIRQQQEDMRRRREEEGKKQE). The interval 1–345 (MTTSHMNGHV…QQIKPPPAKE (345 aa)) is required for the correct localization of PALS1 and PATJ at cell-cell contacts and the normal formation of tight junctions and adherens junctions. Composition is skewed to basic and acidic residues over residues 10 to 34 (VTEESDSEVKNVDLASPEEHQKHRE) and 54 to 78 (AQLERIRQQQEDMRRRREEEGKKQE). Serine 14 and serine 25 each carry phosphoserine. Positions 21-140 (VDLASPEEHQ…LKHIQHTLVD (120 aa)) are interaction with PARD6B. Residues serine 83 and serine 84 each carry the phosphoserine modification. L27 domains lie at 120–177 (KILE…NKAS) and 179–235 (PFPL…MQLE). Residues 181–243 (PLISNAQDLA…LEPITDERVY (63 aa)) are interaction with LIN7C. A PDZ domain is found at 256-336 (IVRIEKARDI…TLTFVLIPSQ (81 aa)). The 73-residue stretch at 345–417 (ETVIHVKAHF…PGKSFQQQRE (73 aa)) folds into the SH3 domain. A Guanylate kinase-like domain is found at 479 to 660 (KRPIILIGPQ…AYQELLRLIN (182 aa)). Residue 486-493 (GPQNCGQN) participates in ATP binding.

Belongs to the MAGUK family. As to quaternary structure, heterodimer with MPP1. Forms a heterotrimeric complex composed of PALS1, LIN7B and PATJ; the N-terminal L27 domain of PALS1 interacts with the L27 domain of PATJ and the C-terminal L27 domain of PALS1 interacts with the L27 domain of LIN7B. Component of a complex composed of PALS1, CRB1 and MPP4. Component of a complex whose core is composed of ARHGAP17, AMOT, PALS1, PATJ and PARD3/PAR3. Component of a complex composed of PALS1, CRB1 and EPB41L5. Within the complex, interacts (via HOOK domain) with EPB41L5 (via FERM domain), and interacts with CRB1 (via intracellular domain). Component of a complex composed of PALS1, MPP3 and CRB1; PALS1 acts as a bridging protein between MPP3 (via guanylate kinase-like domain) and CRB1. Component of a complex composed of CRB3, PALS1 and PATJ. As part of the Crumbs complex; interacts with WWP1, the interaction is enhanced by AMOTL2 and facilitates WWP1 localization to the plasma membrane. The Crumbs complex promotes monoubiquitination of AMOTL2 by WWP1, which activates the Hippo signaling pathway. Interacts (via PDZ domain) with PATJ (via N-terminus). Interacts with EZR. Interacts (via PDZ domain) with CRB1 (via C-terminal ERLI motif). While the PDZ domain is sufficient for interaction with CRB1, the adjacent SH3 and guanylate kinase-like domains are likely to contribute to a high affinity interaction. Interacts with WWTR1/TAZ (via WW domain). Interacts with MPP7. Interacts (via PDZ domain) with CRB3 (via C-terminus). Interacts with LIN7C. Interacts with MPDZ. Interacts with PARD6B. Interacts with SC6A1. Interacts with CDH5; the interaction promotes PALS1 localization to cell junctions and is required for CDH5-mediated vascular lumen formation and endothelial cell. Interacts with NPHP1 (via coiled coil and SH3 domains). Interacts with NPHP4. Interacts with CRB2. (Microbial infection) Interacts (via PDZ domain) with human coronaviruses SARS-CoV and, probably, SARS-CoV-2 envelope small membrane protein E (via C-terminus); this inhibits the interaction between PALS1 and CRB3. Expressed at the outer limiting membrane in the retina (at protein level). Expressed in T lymphocytes (at protein level). Expressed in the kidney (at protein level).

The protein localises to the golgi apparatus. It is found in the cell membrane. It localises to the endomembrane system. Its subcellular location is the cell junction. The protein resides in the tight junction. The protein localises to the adherens junction. It is found in the cell projection. It localises to the axon. Its subcellular location is the perikaryon. The protein resides in the apical cell membrane. The protein localises to the endoplasmic reticulum-Golgi intermediate compartment. Its function is as follows. Plays a role in tight junction biogenesis and in the establishment of cell polarity in epithelial cells. Also involved in adherens junction biogenesis by ensuring correct localization of the exocyst complex protein EXOC4/SEC8 which allows trafficking of adherens junction structural component CDH1 to the cell surface. Plays a role through its interaction with CDH5 in vascular lumen formation and endothelial membrane polarity. Required during embryonic and postnatal retinal development. Required for the maintenance of cerebellar progenitor cells in an undifferentiated proliferative state, preventing premature differentiation, and is required for cerebellar histogenesis, fissure formation, cerebellar layer organization and cortical development. Plays a role in neuronal progenitor cell survival, potentially via promotion of mTOR signaling. Plays a role in the radial and longitudinal extension of the myelin sheath in Schwann cells. May modulate SC6A1/GAT1-mediated GABA uptake by stabilizing the transporter. Plays a role in the T-cell receptor-mediated activation of NF-kappa-B. Required for localization of EZR to the apical membrane of parietal cells and may play a role in the dynamic remodeling of the apical cytoskeleton. Required for the normal polarized localization of the vesicular marker STX4. Required for the correct trafficking of the myelin proteins PMP22 and MAG. Involved in promoting phosphorylation and cytoplasmic retention of transcriptional coactivators YAP1 and WWTR1/TAZ which leads to suppression of TGFB1-dependent transcription of target genes such as CCN2/CTGF, SERPINE1/PAI1, SNAI1/SNAIL1 and SMAD7. (Microbial infection) Acts as an interaction partner for human coronaviruses SARS-CoV and, probably, SARS-CoV-2 envelope protein E which results in delayed formation of tight junctions and disregulation of cell polarity. The polypeptide is Protein PALS1 (Homo sapiens (Human)).